Here is a 240-residue protein sequence, read N- to C-terminus: uncharacterized protein (240 aa).

3 helical membrane passes run 12-32, 66-86, and 89-109; these read ICIH…ILMS, IQVL…FVLV, and ISGY…IYFF. Residues Asn-129 and Asn-157 are each glycosylated (N-linked (GlcNAc...) asparagine; by host).

It localises to the membrane. This is an uncharacterized protein from Acanthamoeba polyphaga mimivirus (APMV).